The chain runs to 249 residues: uncharacterized protein (249 aa).

A signal peptide spans 1 to 43 (MRRGRSRPAGAAPAALLLPLLLLLPLTGCDRLAAAPAEHAAAA). The disordered stretch occupies residues 40-59 (AAAAGDPAQDADRGRRLPPV). A NodB homology domain is found at 68–243 (PVVFLTYDDG…TIEEQGLRVG (176 aa)).

This is an uncharacterized protein from Streptomyces coelicolor (strain ATCC BAA-471 / A3(2) / M145).